The chain runs to 359 residues: Golgi-resident adenosine 3',5'-bisphosphate 3'-phosphatase (359 aa).

Met-1 is modified (N-acetylmethionine). The Cytoplasmic portion of the chain corresponds to 1 to 12 (MAPMGIRLSPLG). A helical membrane pass occupies residues 13 to 33 (VAVFCLLGLGVLYHLYSGFLA). The Lumenal portion of the chain corresponds to 34-359 (GRFSLFGLGG…LPDLEKTGHK (326 aa)). Residues 86 to 106 (ESNVLHEKSKGKTREGAEDKM) are disordered. Asp-110 serves as the catalytic Proton acceptor. Mg(2+) is bound by residues Glu-133, Asp-174, Leu-176, and Asp-177. Thr-179 serves as the catalytic Proton acceptor. Positions 242 and 245 each coordinate AMP. A glycan (N-linked (GlcNAc...) asparagine) is linked at Asn-259. Positions 268 and 272 each coordinate AMP. Residue Asp-300 coordinates Mg(2+).

This sequence belongs to the inositol monophosphatase superfamily. Requires Mg(2+) as cofactor. Post-translationally, contains N-linked glycan resistant to endoglycosydase H.

The protein localises to the golgi apparatus. It is found in the trans-Golgi network membrane. The catalysed reaction is adenosine 3',5'-bisphosphate + H2O = AMP + phosphate. The protein operates within sulfur metabolism. Its activity is regulated as follows. Strongly inhibited by lithium. Its function is as follows. Exhibits 3'-nucleotidase activity toward adenosine 3',5'-bisphosphate (PAP), namely hydrolyzes adenosine 3',5'-bisphosphate into adenosine 5'-monophosphate (AMP) and a phosphate. May play a role in the formation of skeletal elements derived through endochondral ossification, possibly by clearing adenosine 3',5'-bisphosphate produced by Golgi sulfotransferases during glycosaminoglycan sulfation. Has no activity toward 3'-phosphoadenosine 5'-phosphosulfate (PAPS) or inositol phosphate (IP) substrates including I(1)P, I(1,4)P2, I(1,3,4)P3, I(1,4,5)P3 and I(1,3,4,5)P4. The sequence is that of Golgi-resident adenosine 3',5'-bisphosphate 3'-phosphatase from Homo sapiens (Human).